The primary structure comprises 359 residues: Probable deacetylase AF_0130 (359 aa).

Histidine 126 (proton donor/acceptor) is an active-site residue. Zn(2+) is bound by residues aspartate 162, histidine 164, and aspartate 249.

Belongs to the histone deacetylase family. Requires Zn(2+) as cofactor.

Its function is as follows. Probable deacetylase. The chain is Probable deacetylase AF_0130 from Archaeoglobus fulgidus (strain ATCC 49558 / DSM 4304 / JCM 9628 / NBRC 100126 / VC-16).